We begin with the raw amino-acid sequence, 159 residues long: 2-C-methyl-D-erythritol 2,4-cyclodiphosphate synthase (159 aa).

A divalent metal cation-binding residues include D10 and H12. Residues D10–H12 and H36–S37 each bind 4-CDP-2-C-methyl-D-erythritol 2-phosphate. H44 is an a divalent metal cation binding site. Residues D58–G60 and R144 each bind 4-CDP-2-C-methyl-D-erythritol 2-phosphate.

This sequence belongs to the IspF family. As to quaternary structure, homotrimer. A divalent metal cation serves as cofactor.

The enzyme catalyses 4-CDP-2-C-methyl-D-erythritol 2-phosphate = 2-C-methyl-D-erythritol 2,4-cyclic diphosphate + CMP. The protein operates within isoprenoid biosynthesis; isopentenyl diphosphate biosynthesis via DXP pathway; isopentenyl diphosphate from 1-deoxy-D-xylulose 5-phosphate: step 4/6. Functionally, involved in the biosynthesis of isopentenyl diphosphate (IPP) and dimethylallyl diphosphate (DMAPP), two major building blocks of isoprenoid compounds. Catalyzes the conversion of 4-diphosphocytidyl-2-C-methyl-D-erythritol 2-phosphate (CDP-ME2P) to 2-C-methyl-D-erythritol 2,4-cyclodiphosphate (ME-CPP) with a corresponding release of cytidine 5-monophosphate (CMP). This Paraburkholderia phymatum (strain DSM 17167 / CIP 108236 / LMG 21445 / STM815) (Burkholderia phymatum) protein is 2-C-methyl-D-erythritol 2,4-cyclodiphosphate synthase.